The sequence spans 396 residues: Proteinase-activated receptor 4 (396 aa).

The signal sequence occupies residues 1–16 (MCWPLLYPLVLGLSIS). The propeptide at 17–59 (LAEGIQTPSIYDDVESTRGSHEGPLGPTVELKEPKSSDKPNPR) is removed for receptor activation. A disordered region spans residues 28 to 62 (DDVESTRGSHEGPLGPTVELKEPKSSDKPNPRGYP). A compositionally biased stretch (basic and acidic residues) spans 46-57 (ELKEPKSSDKPN). Residues 60–94 (GYPGKFCANDSDTLELPASSQALLLGWVPTRLVPA) lie on the Extracellular side of the membrane. Asparagine 68 is a glycosylation site (N-linked (GlcNAc...) asparagine). The helical transmembrane segment at 95 to 115 (LYGLVVAVGLPANGLALWVLA) threads the bilayer. The Cytoplasmic segment spans residues 116 to 120 (TRVPR). The chain crosses the membrane as a helical span at residues 121-141 (LPSTILLMNLAVADLLLALVL). Topologically, residues 142–162 (PPRLAYHLRGQRWPFGEAACR) are extracellular. A disulfide bridge links cysteine 161 with cysteine 240. The chain crosses the membrane as a helical span at residues 163–183 (VATAALYGHMYGSVLLLAAVS). Topologically, residues 184–203 (LDRYLALVHPLRARALRGQR) are cytoplasmic. Residues 204–224 (LTTGLCLVAWLSAATLALPLT) traverse the membrane as a helical segment. Over 225-255 (LHRQTFRLAGSDRMLCHDALPLTEQTSHWRP) the chain is Extracellular. Residues 256-276 (AFICLAVLGCFVPLLAMGLCY) traverse the membrane as a helical segment. At 277 to 295 (GATLRALAANGQRYSHALR) the chain is on the cytoplasmic side. Residues 296-316 (LTALVLFSAVASFTPSNVLLV) form a helical membrane-spanning segment. The Extracellular segment spans residues 317-331 (LHYSNPSPEAWGNLY). The chain crosses the membrane as a helical span at residues 332-355 (GAYVPSLALSTLNSCVDPFIYYYV). The Cytoplasmic portion of the chain corresponds to 356–396 (SHEFREKVRAMLCRQPEASSSSQASREAGSRGTAICSSTLL).

Belongs to the G-protein coupled receptor 1 family. Post-translationally, a proteolytic cleavage generates a new N-terminus that functions as a tethered ligand. In terms of tissue distribution, highly expressed in the spleen. Slight expression in the heart, lung, skeletal muscle and kidney. No detectable expression in brain, liver or testis. Also detected in platelets.

The protein localises to the cell membrane. Its function is as follows. Receptor for activated thrombin or trypsin coupled to G proteins that stimulate phosphoinositide hydrolysis. May play a role in platelets activation. This Mus musculus (Mouse) protein is Proteinase-activated receptor 4 (F2rl3).